A 330-amino-acid chain; its full sequence is N-acetyl-gamma-glutamyl-phosphate reductase (330 aa).

Cys143 is a catalytic residue.

This sequence belongs to the NAGSA dehydrogenase family. Type 1 subfamily.

The protein localises to the cytoplasm. The catalysed reaction is N-acetyl-L-glutamate 5-semialdehyde + phosphate + NADP(+) = N-acetyl-L-glutamyl 5-phosphate + NADPH + H(+). The protein operates within amino-acid biosynthesis; L-arginine biosynthesis; N(2)-acetyl-L-ornithine from L-glutamate: step 3/4. Functionally, catalyzes the NADPH-dependent reduction of N-acetyl-5-glutamyl phosphate to yield N-acetyl-L-glutamate 5-semialdehyde. The chain is N-acetyl-gamma-glutamyl-phosphate reductase from Methanocorpusculum labreanum (strain ATCC 43576 / DSM 4855 / Z).